Consider the following 207-residue polypeptide: LexA repressor (207 aa).

The segment at residues 28-48 (RAEIAQKLGFKSANAAEEHLK) is a DNA-binding region (H-T-H motif). Active-site for autocatalytic cleavage activity residues include serine 124 and lysine 161.

The protein belongs to the peptidase S24 family. Homodimer.

The catalysed reaction is Hydrolysis of Ala-|-Gly bond in repressor LexA.. Functionally, represses a number of genes involved in the response to DNA damage (SOS response), including recA and lexA. In the presence of single-stranded DNA, RecA interacts with LexA causing an autocatalytic cleavage which disrupts the DNA-binding part of LexA, leading to derepression of the SOS regulon and eventually DNA repair. The polypeptide is LexA repressor (Aeromonas salmonicida (strain A449)).